Here is a 331-residue protein sequence, read N- to C-terminus: Ribosomal RNA small subunit methyltransferase H (331 aa).

S-adenosyl-L-methionine-binding positions include 38 to 40 (GGY), D56, F83, D100, and Q107. The interval 287–331 (DEAELAENPRARSARLRVGVRTDAPAGKVDPQALGTPLIPKKGRR) is disordered.

Belongs to the methyltransferase superfamily. RsmH family.

The protein resides in the cytoplasm. The enzyme catalyses cytidine(1402) in 16S rRNA + S-adenosyl-L-methionine = N(4)-methylcytidine(1402) in 16S rRNA + S-adenosyl-L-homocysteine + H(+). Specifically methylates the N4 position of cytidine in position 1402 (C1402) of 16S rRNA. The sequence is that of Ribosomal RNA small subunit methyltransferase H from Cereibacter sphaeroides (strain KD131 / KCTC 12085) (Rhodobacter sphaeroides).